Reading from the N-terminus, the 317-residue chain is 2-keto-3-deoxygluconate permease 1 (317 aa).

10 helical membrane passes run 10–30, 47–67, 82–102, 106–126, 134–154, 159–179, 195–215, 217–237, 248–268, and 279–299; these read VPGGMMVVPLVIGAVINTFAP, AAPLIGAFLLCMGAGISVKAA, LLVAIGIGLGVEHLFGAEGIF, GVAIIAAMSNSNGGLYAALVG, VGAISILSLNDGPFFTMIALG, ANIPIMALVAVLVPLVVGMIL, PLLIPFFAFALGAGINLEMLL, GGLAGILLGVLTTFVGGFFNI, IAGAAASSTAGNAVATPLAIA, and AAAAPLIAASVITTAILTPVL.

The protein belongs to the KdgT transporter family.

It localises to the cell inner membrane. The enzyme catalyses 2-dehydro-3-deoxy-D-gluconate(in) + H(+)(in) = 2-dehydro-3-deoxy-D-gluconate(out) + H(+)(out). In terms of biological role, catalyzes the proton-dependent uptake of 2-keto-3-deoxygluconate (KDG) into the cell. This chain is 2-keto-3-deoxygluconate permease 1, found in Salmonella typhi.